A 329-amino-acid chain; its full sequence is 3'-5' exonuclease (329 aa).

The disordered stretch occupies residues glutamate 26–glutamate 88. Positions lysine 46 to proline 65 are enriched in basic and acidic residues. Residues serine 78 and serine 86 each carry the phosphoserine modification. The 159-residue stretch at threonine 130–glutamate 288 folds into the 3'-5' exonuclease domain. 3 residues coordinate Mg(2+): aspartate 138, glutamate 140, and aspartate 276.

This sequence belongs to the WRNexo family.

Its subcellular location is the nucleus. Its function is as follows. Has exonuclease activity on both single-stranded and duplex templates bearing overhangs, but not blunt ended duplex DNA, and cleaves in a 3'-5' direction. Essential for the formation of DNA replication focal centers. Has an important role in maintaining genome stability. In Drosophila mojavensis (Fruit fly), this protein is 3'-5' exonuclease.